Here is a 252-residue protein sequence, read N- to C-terminus: MILRAQANGGQPGSPWLVFLHGFSGDCREWQQIGEQFPDFSRLYIDLPGHGDSADIRVSGFADVCDLLRNTLFSYNILKYWLVGYSLGGRVAMMAACQTLPGFCGLVVEGGHPGLQREAERDARRRSDGRWAARFRREPLRDVFTDWYQQPVFASLDASQREALVALRSQNNGETLAAMLEATSLAVQPDLRARLNARTFPFYYLCGERDSKFRALAAELSVPCHMIRNAGHNAHRENPAGVVDSLAQILRL.

This sequence belongs to the AB hydrolase superfamily. MenH family. Monomer.

It catalyses the reaction 5-enolpyruvoyl-6-hydroxy-2-succinyl-cyclohex-3-ene-1-carboxylate = (1R,6R)-6-hydroxy-2-succinyl-cyclohexa-2,4-diene-1-carboxylate + pyruvate. It participates in quinol/quinone metabolism; 1,4-dihydroxy-2-naphthoate biosynthesis; 1,4-dihydroxy-2-naphthoate from chorismate: step 3/7. Its pathway is quinol/quinone metabolism; menaquinone biosynthesis. Functionally, catalyzes a proton abstraction reaction that results in 2,5-elimination of pyruvate from 2-succinyl-5-enolpyruvyl-6-hydroxy-3-cyclohexene-1-carboxylate (SEPHCHC) and the formation of 2-succinyl-6-hydroxy-2,4-cyclohexadiene-1-carboxylate (SHCHC). In Citrobacter koseri (strain ATCC BAA-895 / CDC 4225-83 / SGSC4696), this protein is 2-succinyl-6-hydroxy-2,4-cyclohexadiene-1-carboxylate synthase.